A 414-amino-acid chain; its full sequence is Serine hydroxymethyltransferase (414 aa).

Residues Leu121 and Gly125–Leu127 each bind (6S)-5,6,7,8-tetrahydrofolate. Lys229 carries the post-translational modification N6-(pyridoxal phosphate)lysine.

The protein belongs to the SHMT family. As to quaternary structure, homodimer. Pyridoxal 5'-phosphate serves as cofactor.

The protein localises to the cytoplasm. The catalysed reaction is (6R)-5,10-methylene-5,6,7,8-tetrahydrofolate + glycine + H2O = (6S)-5,6,7,8-tetrahydrofolate + L-serine. The protein operates within one-carbon metabolism; tetrahydrofolate interconversion. It participates in amino-acid biosynthesis; glycine biosynthesis; glycine from L-serine: step 1/1. Its function is as follows. Catalyzes the reversible interconversion of serine and glycine with tetrahydrofolate (THF) serving as the one-carbon carrier. This reaction serves as the major source of one-carbon groups required for the biosynthesis of purines, thymidylate, methionine, and other important biomolecules. Also exhibits THF-independent aldolase activity toward beta-hydroxyamino acids, producing glycine and aldehydes, via a retro-aldol mechanism. The protein is Serine hydroxymethyltransferase of Herminiimonas arsenicoxydans.